Consider the following 621-residue polypeptide: Laccase-2 (621 aa).

A signal peptide spans 1–23 (MMKSFFSAAALLLGLVAPSAVLA). Residues 24-48 (APSLPGVPREVTRDLLRPVEERQSS) constitute a propeptide that is removed on maturation. A disulfide bond links C49 and C57. 2 Plastocyanin-like domains span residues 78–201 (TRTY…IVVN) and 210–367 (IDLG…LPTN). Residue N133 is glycosylated (N-linked (GlcNAc...) asparagine). The Cu cation site is built by H138, H140, H183, and H185. 2 cysteine pairs are disulfide-bonded: C159/C586 and C343/C377. N-linked (GlcNAc...) asparagine glycosylation is found at N261, N276, N289, N325, and N334. N-linked (GlcNAc...) asparagine glycosylation is found at N401, N421, and N441. One can recognise a Plastocyanin-like 3 domain in the interval 430–566 (DKPIVDYVIA…GGLSVQYLER (137 aa)). 7 residues coordinate Cu cation: H476, H479, H481, H548, C549, H550, and H554. Residues 606 to 621 (KVKKWVGEHPDWYIKN) constitute a propeptide that is removed on maturation.

This sequence belongs to the multicopper oxidase family. As to quaternary structure, monomer. It depends on Cu cation as a cofactor. In terms of processing, proteolytically processed at both its N-terminus and its C-terminus.

The protein localises to the secreted. The enzyme catalyses 4 hydroquinone + O2 = 4 benzosemiquinone + 2 H2O. Functionally, probably involved in lignin degradation and in the detoxification of lignin-derived products in its natural habitat (herbivorous dung), which is rich in lignin of grasses and straw. Probably involved in melanin synthesis and in perithecia development. In Podospora anserina (Pleurage anserina), this protein is Laccase-2 (LAC2).